The following is a 198-amino-acid chain: Probable GTP-binding protein EngB (198 aa).

The EngB-type G domain maps to 22-195 (NRVEVAFVGR…IDNLFLEFAT (174 aa)). Residues 30-37 (GRSNVGKS), 57-61 (GKTRL), 75-78 (DLPG), 142-145 (TKSD), and 174-176 (FSS) contribute to the GTP site. Residues Ser-37 and Thr-59 each contribute to the Mg(2+) site.

It belongs to the TRAFAC class TrmE-Era-EngA-EngB-Septin-like GTPase superfamily. EngB GTPase family. Requires Mg(2+) as cofactor.

Necessary for normal cell division and for the maintenance of normal septation. This Clostridium beijerinckii (strain ATCC 51743 / NCIMB 8052) (Clostridium acetobutylicum) protein is Probable GTP-binding protein EngB.